Consider the following 706-residue polypeptide: Glycylpeptide N-tetradecanoyltransferase (706 aa).

Residues 1–119 (MSGIAGTSQD…LASGSSREGK (119 aa)) form a disordered region. The segment covering 7–42 (TSQDTSVAASASSSSTRPAAASSSIAPPSPSLTTAP) has biased composition (low complexity). Acidic residues predominate over residues 47-65 (EQDDDDDQENDDEEEEEEG). Over residues 78–95 (KQRKKKKSKAAAKLRKKL) the composition is skewed to basic residues. Tetradecanoyl-CoA contacts are provided by residues 180–183 (HKFW), 317–319 (LCV), and 325–329 (SKRLA). The active-site Proton acceptor; via carboxylate is the V706.

Belongs to the NMT family. Monomer.

It is found in the cytoplasm. It carries out the reaction N-terminal glycyl-[protein] + tetradecanoyl-CoA = N-tetradecanoylglycyl-[protein] + CoA + H(+). Adds a myristoyl group to the N-terminal glycine residue of certain cellular proteins. This Mycosarcoma maydis (Corn smut fungus) protein is Glycylpeptide N-tetradecanoyltransferase (NMT1).